The primary structure comprises 1771 residues: Myosin-H heavy chain (1771 aa).

The region spanning 7–57 is the Myosin N-terminal SH3-like domain; that stretch reads CGKEKVWVPNPEKGWINGDLIKEIPGEGWLVRDENGKEIKIEKDELRMQNP. One can recognise a Myosin motor domain in the interval 61–840; the sequence is EGIDDMTSLS…IIANLELLRS (780 aa). 154–161 is a binding site for ATP; sequence GESGAGKT. Residues 690–712 are actin-binding; the sequence is LNSLMTTINSTNPHYIRCIKPNT. IQ domains lie at 843 to 872, 866 to 895, and 940 to 969; these read MINS…SSIY, TKHS…ENSA, and RIKK…EAKS. 3 disordered regions span residues 1070–1176, 1218–1282, and 1312–1343; these read EKQH…NNVD, VKKS…PINM, and LNNG…KHIQ. The segment covering 1077–1111 has biased composition (polar residues); that stretch reads YKNNEVVGNTSFEGSTTTNNGVTSPPKSSPASPIR. Low complexity predominate over residues 1112–1139; it reads NSINSNSDTTISGSSDDSIDNTDSLILS. The span at 1143–1153 shows a compositional bias: basic and acidic residues; that stretch reads HKGEDRKRNHE. Residues 1180-1224 are a coiled coil; the sequence is RRQFNELEKEYKELKQMDETHKQYIESLKLQITQLEEKVKKSSSH. Positions 1253-1281 are enriched in low complexity; it reads NSSSHHQQQQQQHNISPSNSITSTTSPIN. Positions 1427–1695 constitute a Dilute domain; that stretch reads TGVLDPIETN…LTSLMDSPKY (269 aa).

This sequence belongs to the TRAFAC class myosin-kinesin ATPase superfamily. Myosin family. Myosin I heavy chain is single-headed. Dimer of a heavy and a light chain. Inability to self-assemble into filaments.

Its function is as follows. Myosin is a protein that binds to actin and has ATPase activity that is activated by actin. The protein is Myosin-H heavy chain (myoH) of Dictyostelium discoideum (Social amoeba).